Reading from the N-terminus, the 81-residue chain is Protein Vpu (81 aa).

Over 1–7 (MSNLLAI) the chain is Extracellular. The helical transmembrane segment at 8–28 (GIAALIVALIITIVVWTIAYI) threads the bilayer. At 29-81 (EYKKLVRQRKINRLYKRISERAEDSGNESEGDAEELAALGEVGPFIPGDINNL) the chain is on the cytoplasmic side. Phosphoserine; by host CK2 occurs at positions 53 and 57.

This sequence belongs to the HIV-1 VPU protein family. In terms of assembly, homopentamer. Interacts with host CD4 and BRTC; these interactions induce proteasomal degradation of CD4. Interacts with host BST2; this interaction leads to the degradation of host BST2. Interacts with host FBXW11. Interacts with host AP1M1; this interaction plays a role in the mistrafficking and subsequent degradation of host BST2. Interacts with host RANBP2; this interaction allows Vpu to down-regulate host BLM sumoylation. In terms of processing, phosphorylated by host CK2. This phosphorylation is necessary for interaction with human BTRC and degradation of CD4.

The protein resides in the host membrane. Its activity is regulated as follows. Ion channel activity is inhibited by hexamethylene amiloride in vitro. Its function is as follows. Enhances virion budding by targeting host CD4 and Tetherin/BST2 to proteasome degradation. Degradation of CD4 prevents any unwanted premature interactions between viral Env and its host receptor CD4 in the endoplasmic reticulum. Degradation of antiretroviral protein Tetherin/BST2 is important for virion budding, as BST2 tethers new viral particles to the host cell membrane. Mechanistically, Vpu bridges either CD4 or BST2 to BTRC, a substrate recognition subunit of the Skp1/Cullin/F-box protein E3 ubiquitin ligase, induces their ubiquitination and subsequent proteasomal degradation. The alteration of the E3 ligase specificity by Vpu seems to promote the degradation of host IKBKB, leading to NF-kappa-B down-regulation and subsequent apoptosis. Acts as a viroporin that forms an oligomeric ion channel in membranes. Modulates the host DNA repair mechanisms to promote degradation of nuclear viral cDNA in cells that are already productively infected in order to suppress immune sensing and proviral hyper-integration (superinfection). Manipulates PML-NBs and modulates SUMOylation of host BLM protein thereby enhancing its DNA-end processing activity toward viral unintegrated linear DNA. Also inhibits RAD52-mediated homologous repair of viral cDNA, preventing the generation of dead-end circular forms of single copies of the long terminal repeat and permitting sustained nucleolytic attack. This chain is Protein Vpu, found in Homo sapiens (Human).